Consider the following 266-residue polypeptide: Glucosamine-6-phosphate deaminase (266 aa).

The active-site Proton acceptor; for enolization step is the Asp72. The active-site For ring-opening step is Asp141. His143 (proton acceptor; for ring-opening step) is an active-site residue. Glu148 (for ring-opening step) is an active-site residue.

It belongs to the glucosamine/galactosamine-6-phosphate isomerase family. NagB subfamily. Homohexamer; trimer of disulfide-linked dimers.

It carries out the reaction alpha-D-glucosamine 6-phosphate + H2O = beta-D-fructose 6-phosphate + NH4(+). Its pathway is amino-sugar metabolism; N-acetylneuraminate degradation; D-fructose 6-phosphate from N-acetylneuraminate: step 5/5. With respect to regulation, allosterically activated by N-acetylglucosamine 6-phosphate (GlcNAc6P). In terms of biological role, catalyzes the reversible isomerization-deamination of glucosamine 6-phosphate (GlcN6P) to form fructose 6-phosphate (Fru6P) and ammonium ion. This chain is Glucosamine-6-phosphate deaminase, found in Shigella boydii serotype 18 (strain CDC 3083-94 / BS512).